Reading from the N-terminus, the 412-residue chain is ATP phosphoribosyltransferase regulatory subunit (412 aa).

This sequence belongs to the class-II aminoacyl-tRNA synthetase family. HisZ subfamily. As to quaternary structure, heteromultimer composed of HisG and HisZ subunits.

The protein localises to the cytoplasm. It participates in amino-acid biosynthesis; L-histidine biosynthesis; L-histidine from 5-phospho-alpha-D-ribose 1-diphosphate: step 1/9. Its function is as follows. Required for the first step of histidine biosynthesis. May allow the feedback regulation of ATP phosphoribosyltransferase activity by histidine. This chain is ATP phosphoribosyltransferase regulatory subunit, found in Dehalococcoides mccartyi (strain CBDB1).